A 503-amino-acid polypeptide reads, in one-letter code: AMP phosphorylase (503 aa).

AMP-binding positions include glycine 168, 194–199 (SRAITS), and threonine 203. The active-site Proton donor is aspartate 256. The AMP site is built by serine 264 and lysine 288.

Belongs to the thymidine/pyrimidine-nucleoside phosphorylase family. Type 2 subfamily.

The enzyme catalyses AMP + phosphate = alpha-D-ribose 1,5-bisphosphate + adenine. It carries out the reaction CMP + phosphate = cytosine + alpha-D-ribose 1,5-bisphosphate. It catalyses the reaction UMP + phosphate = alpha-D-ribose 1,5-bisphosphate + uracil. Catalyzes the conversion of AMP and phosphate to adenine and ribose 1,5-bisphosphate (R15P). Exhibits phosphorylase activity toward CMP and UMP in addition to AMP. Functions in an archaeal AMP degradation pathway, together with R15P isomerase and RubisCO. This is AMP phosphorylase from Pyrococcus furiosus (strain ATCC 43587 / DSM 3638 / JCM 8422 / Vc1).